We begin with the raw amino-acid sequence, 209 residues long: Large ribosomal subunit protein uL3 (209 aa).

Q150 is subject to N5-methylglutamine.

The protein belongs to the universal ribosomal protein uL3 family. Part of the 50S ribosomal subunit. Forms a cluster with proteins L14 and L19. Methylated by PrmB.

One of the primary rRNA binding proteins, it binds directly near the 3'-end of the 23S rRNA, where it nucleates assembly of the 50S subunit. The polypeptide is Large ribosomal subunit protein uL3 (Klebsiella pneumoniae (strain 342)).